The chain runs to 377 residues: Protein ECM9 (377 aa).

In terms of biological role, may be involved in cell wall organization and biogenesis. The polypeptide is Protein ECM9 (ECM9) (Saccharomyces cerevisiae (strain ATCC 204508 / S288c) (Baker's yeast)).